The sequence spans 166 residues: Large ribosomal subunit protein uL10 (166 aa).

It belongs to the universal ribosomal protein uL10 family. Part of the ribosomal stalk of the 50S ribosomal subunit. The N-terminus interacts with L11 and the large rRNA to form the base of the stalk. The C-terminus forms an elongated spine to which L12 dimers bind in a sequential fashion forming a multimeric L10(L12)X complex.

Forms part of the ribosomal stalk, playing a central role in the interaction of the ribosome with GTP-bound translation factors. The chain is Large ribosomal subunit protein uL10 from Neisseria gonorrhoeae (strain ATCC 700825 / FA 1090).